The primary structure comprises 359 residues: Glycerol-1-phosphate dehydrogenase [NAD(P)+] (359 aa).

Residues 107–111 and 129–132 each bind NAD(+); these read GRVID and TAAS. Aspartate 134 lines the substrate pocket. Residue serine 138 coordinates NAD(+). Aspartate 181 is a binding site for substrate. Zn(2+) contacts are provided by aspartate 181 and histidine 261. Substrate is bound at residue histidine 265. Residue histidine 277 participates in Zn(2+) binding.

This sequence belongs to the glycerol-1-phosphate dehydrogenase family. Zn(2+) serves as cofactor.

It localises to the cytoplasm. It catalyses the reaction sn-glycerol 1-phosphate + NAD(+) = dihydroxyacetone phosphate + NADH + H(+). It carries out the reaction sn-glycerol 1-phosphate + NADP(+) = dihydroxyacetone phosphate + NADPH + H(+). The protein operates within membrane lipid metabolism; glycerophospholipid metabolism. Its function is as follows. Catalyzes the NAD(P)H-dependent reduction of dihydroxyacetonephosphate (DHAP or glycerone phosphate) to glycerol 1-phosphate (G1P). The G1P thus generated is used as the glycerophosphate backbone of phospholipids in the cellular membranes of Archaea. The chain is Glycerol-1-phosphate dehydrogenase [NAD(P)+] from Methanoregula boonei (strain DSM 21154 / JCM 14090 / 6A8).